Reading from the N-terminus, the 518-residue chain is MTQHDRLLIIDFGSQVTQLIARRLRELNVYCEIHPYQNVTEAFLKGFAPKAVIFSGGPSSVFAEGAPMPPAGVFDLGVPILGICYGQQVMMHCLGGKVERGHGTAEFGRAFVTPTAERLAILDGWFEEGREQVWMSHGDHVSQIAPGFQVFGTSPNAPFAITGDPARHFYAVQFHPEVHHTPKGAKLYENFVRLAGFKGDWTMGAYREEAIARIRAQVGDQKVICGLSGGVDSSVAAVLIHEAIGDQLTCVFVDHGLLRLGEAEQVVKMFRDHYNMPLIHADESDLFLGALEGVSDPEVKRKTIGRLFIDVFQKHAADVGGATFLAQGTLYPDVIESVSFSGGPSVTIKSHHNVGGLPEKMGLKLVEPLRELFKDEVRALGRELGLPESFIGRHPFPGPGLAIRCPGEITREKLEILRRADAVYIDQIRRHGLYDEIWQAFVALLPVRTVGVMGDGRTYDYACALRAVTSVDGMTADYYPFTHDFLGETATRIINEVQGINRVTYDITSKPPGTIEWE.

Residues 6–200 enclose the Glutamine amidotransferase type-1 domain; it reads RLLIIDFGSQ…FVRLAGFKGD (195 aa). Cys84 acts as the Nucleophile in catalysis. Catalysis depends on residues His175 and Glu177. Residues 201 to 393 form the GMPS ATP-PPase domain; sequence WTMGAYREEA…LGLPESFIGR (193 aa). An ATP-binding site is contributed by 228–234; the sequence is SGGVDSS.

In terms of assembly, homodimer.

The catalysed reaction is XMP + L-glutamine + ATP + H2O = GMP + L-glutamate + AMP + diphosphate + 2 H(+). It participates in purine metabolism; GMP biosynthesis; GMP from XMP (L-Gln route): step 1/1. Functionally, catalyzes the synthesis of GMP from XMP. This chain is GMP synthase [glutamine-hydrolyzing], found in Cereibacter sphaeroides (strain ATCC 17023 / DSM 158 / JCM 6121 / CCUG 31486 / LMG 2827 / NBRC 12203 / NCIMB 8253 / ATH 2.4.1.) (Rhodobacter sphaeroides).